Reading from the N-terminus, the 327-residue chain is MHTAIIAGITTFILTIIGIPAFIRFYQKARISGQQMHEDVKQHQAKAGTPTMGGTVFLLASIVASFVIALFSGNLSSNVTTILFILFLYGLVGFLDDFLKVFRRINEGLNPKQKLFLQLVGGVVFYLFFERHGGGDMLNVFGFPLELGFLYIFFVLFWLVGFSNAVNLTDGIDGLASISVVISLGAYAVIALEQKRFDLLIVIFSMIGGLLGFFGFNHKPAKIFMGDVGSLALGGMLAALSIALHQEWTLLLIGIVYVFETASVMLQVTYFKMTGGKRIFRMTPVHHHFELGGFSGRGKAWSEWKVDFLFWGIGLVASLITLAILYL.

The next 10 helical transmembrane spans lie at 3 to 23 (TAII…PAFI), 51 to 71 (TMGG…IALF), 79 to 99 (VTTI…DDFL), 115 to 135 (LFLQ…HGGG), 140 to 160 (VFGF…FWLV), 172 to 192 (IDGL…VIAL), 197 to 217 (FDLL…FGFN), 223 to 243 (IFMG…LSIA), 248 to 268 (WTLL…MLQV), and 306 to 326 (VDFL…AILY).

The protein belongs to the glycosyltransferase 4 family. MraY subfamily. The cofactor is Mg(2+).

The protein localises to the cell membrane. The catalysed reaction is UDP-N-acetyl-alpha-D-muramoyl-L-alanyl-gamma-D-glutamyl-L-lysyl-D-alanyl-D-alanine + di-trans,octa-cis-undecaprenyl phosphate = Mur2Ac(oyl-L-Ala-gamma-D-Glu-L-Lys-D-Ala-D-Ala)-di-trans,octa-cis-undecaprenyl diphosphate + UMP. Its pathway is cell wall biogenesis; peptidoglycan biosynthesis. Functionally, catalyzes the initial step of the lipid cycle reactions in the biosynthesis of the cell wall peptidoglycan: transfers peptidoglycan precursor phospho-MurNAc-pentapeptide from UDP-MurNAc-pentapeptide onto the lipid carrier undecaprenyl phosphate, yielding undecaprenyl-pyrophosphoryl-MurNAc-pentapeptide, known as lipid I. This Streptococcus gordonii (strain Challis / ATCC 35105 / BCRC 15272 / CH1 / DL1 / V288) protein is Phospho-N-acetylmuramoyl-pentapeptide-transferase.